Here is a 316-residue protein sequence, read N- to C-terminus: CD276 antigen (316 aa).

Positions 1 to 28 (MLRGWGGPSVGVCVRTALGVLCLCLTGA) are cleaved as a signal peptide. The region spanning 29-139 (VEVQVSEDPV…DSAAVSLQVA (111 aa)) is the Ig-like V-type domain. At 29 to 248 (VEVQVSEDPV…GQPLTFPPEA (220 aa)) the chain is on the extracellular side. Asparagine 104, asparagine 189, and asparagine 215 each carry an N-linked (GlcNAc...) asparagine glycan. An Ig-like C2-type domain is found at 145–238 (PSMTLEPNKD…QDAHGSVTIT (94 aa)). Cysteines 165 and 220 form a disulfide. A helical transmembrane segment spans residues 249 to 269 (LWVTVGLSVCLVVLLVALAFV). Residues 270 to 316 (CWRKIKQSCEEENAGAEDQDGDGEGSKTALRPLKPSENKEDDGQEIA) are Cytoplasmic-facing. Residues 280 to 292 (EENAGAEDQDGDG) show a composition bias toward acidic residues. A disordered region spans residues 280-316 (EENAGAEDQDGDGEGSKTALRPLKPSENKEDDGQEIA).

It belongs to the immunoglobulin superfamily. BTN/MOG family. In terms of assembly, interacts with TREML2 and this interaction enhances T-cell activation. As to expression, ubiquitous.

Its subcellular location is the membrane. Its function is as follows. Modulates T-cell-mediated immune responses and the development of acute and chronic transplant rejection. Plays a positive regulatory role in bone formation and has a dual role in the bone-immune interface. Induces antitumor immunity as it activates both acquired and innate immunity leading to natural killer cell and CD8 T-cell dependent killing of tumor cells. The protein is CD276 antigen (Cd276) of Mus musculus (Mouse).